The primary structure comprises 498 residues: ATP synthase subunit beta, chloroplastic (498 aa).

The residue at position 6 (Thr6) is a Phosphothreonine. Phosphoserine is present on Ser13. 172 to 179 provides a ligand contact to ATP; that stretch reads GGAGVGKT.

This sequence belongs to the ATPase alpha/beta chains family. As to quaternary structure, F-type ATPases have 2 components, CF(1) - the catalytic core - and CF(0) - the membrane proton channel. CF(1) has five subunits: alpha(3), beta(3), gamma(1), delta(1), epsilon(1). CF(0) has four main subunits: a(1), b(1), b'(1) and c(9-12).

Its subcellular location is the plastid. The protein resides in the chloroplast thylakoid membrane. The enzyme catalyses ATP + H2O + 4 H(+)(in) = ADP + phosphate + 5 H(+)(out). Functionally, produces ATP from ADP in the presence of a proton gradient across the membrane. The catalytic sites are hosted primarily by the beta subunits. In Draba nemorosa (Woodland whitlowgrass), this protein is ATP synthase subunit beta, chloroplastic.